Reading from the N-terminus, the 433-residue chain is Ribosomal protein uS12 methylthiotransferase RimO (433 aa).

In terms of domain architecture, MTTase N-terminal spans 6-122 (QSIFLLSLGC…IISVLGGSYR (117 aa)). Positions 15, 51, 85, 146, 150, and 153 each coordinate [4Fe-4S] cluster. Residues 132–362 (LTPPHYAWLK…MELQESIAAE (231 aa)) enclose the Radical SAM core domain. The region spanning 365-432 (RELEGRVMKV…AYELHGRVND (68 aa)) is the TRAM domain.

This sequence belongs to the methylthiotransferase family. RimO subfamily. [4Fe-4S] cluster is required as a cofactor.

Its subcellular location is the cytoplasm. The catalysed reaction is L-aspartate(89)-[ribosomal protein uS12]-hydrogen + (sulfur carrier)-SH + AH2 + 2 S-adenosyl-L-methionine = 3-methylsulfanyl-L-aspartate(89)-[ribosomal protein uS12]-hydrogen + (sulfur carrier)-H + 5'-deoxyadenosine + L-methionine + A + S-adenosyl-L-homocysteine + 2 H(+). Catalyzes the methylthiolation of an aspartic acid residue of ribosomal protein uS12. The chain is Ribosomal protein uS12 methylthiotransferase RimO from Prosthecochloris aestuarii (strain DSM 271 / SK 413).